The following is a 313-amino-acid chain: Mitochondrial uncoupling protein 4 (313 aa).

Solcar repeat units lie at residues 4-115 (KSFV…LKNK), 124-215 (LNLS…FKEG), and 224-309 (DGLG…VRKL). 6 helical membrane-spanning segments follow: residues 6–26 (FVEGGIASVIAGCSTHPLDLI), 84–104 (AAALFSGVSATLLRQTLYSTT), 130–150 (IGAGLVAGGIGAAVGNPADVA), 189–209 (RGSALTINRAMIVTAAQLASY), 230–250 (VVASFAAGFVASVASNPVDVI), and 282–302 (YKGFVPTVCRQGPFTVVLFVT).

It belongs to the mitochondrial carrier (TC 2.A.29) family. As to expression, expressed in roots, leaves, stems and flowers.

It is found in the mitochondrion inner membrane. In terms of biological role, PUMPS are mitochondrial transporter proteins that create proton leaks across the inner mitochondrial membrane, thus uncoupling oxidative phosphorylation. This leads to a decrease in the efficiency of oxidative phosphorylation and an increase in heat production. May be involved in protecting plant cells against oxidative stress damage. Recombinant PUMP4, reconstituted into liposomes, transports a wide range of dicarboxylic acids including malate, oxaloacetate and succinate as well as phosphate, sulfate and thiosulfate. However, it is unknown if these transports are of any biological significance in vivo. In Arabidopsis thaliana (Mouse-ear cress), this protein is Mitochondrial uncoupling protein 4 (PUMP4).